A 484-amino-acid polypeptide reads, in one-letter code: Adenylosuccinate lyase (484 aa).

Ala-2 carries the N-acetylalanine modification. Residues 20–21, 85–87, and 111–112 each bind substrate; these read RY, RHD, and TS. At Lys-147 the chain carries N6-acetyllysine. The active-site Proton donor/acceptor is His-159. Gln-241 is a substrate binding site. The active-site Proton donor/acceptor is Ser-289. Residue Lys-295 is modified to N6-acetyllysine. Residues Arg-303, Arg-329, Ser-334, and Arg-338 each coordinate substrate. Lys-415 participates in a covalent cross-link: Glycyl lysine isopeptide (Lys-Gly) (interchain with G-Cter in SUMO1).

It belongs to the lyase 1 family. Adenylosuccinate lyase subfamily. Homotetramer. Residues from neighboring subunits contribute catalytic and substrate-binding residues to each active site.

The catalysed reaction is N(6)-(1,2-dicarboxyethyl)-AMP = fumarate + AMP. It catalyses the reaction (2S)-2-[5-amino-1-(5-phospho-beta-D-ribosyl)imidazole-4-carboxamido]succinate = 5-amino-1-(5-phospho-beta-D-ribosyl)imidazole-4-carboxamide + fumarate. The protein operates within purine metabolism; AMP biosynthesis via de novo pathway; AMP from IMP: step 2/2. It functions in the pathway purine metabolism; IMP biosynthesis via de novo pathway; 5-amino-1-(5-phospho-D-ribosyl)imidazole-4-carboxamide from 5-amino-1-(5-phospho-D-ribosyl)imidazole-4-carboxylate: step 2/2. Functionally, catalyzes two non-sequential steps in de novo AMP synthesis: converts (S)-2-(5-amino-1-(5-phospho-D-ribosyl)imidazole-4-carboxamido)succinate (SAICAR) to fumarate plus 5-amino-1-(5-phospho-D-ribosyl)imidazole-4-carboxamide, and thereby also contributes to de novo IMP synthesis, and converts succinyladenosine monophosphate (SAMP) to AMP and fumarate. The sequence is that of Adenylosuccinate lyase (Adsl) from Mus musculus (Mouse).